A 246-amino-acid chain; its full sequence is Probable phosphatase AHA_1344 (246 aa).

Residues H8, H10, H16, H41, E74, H102, H132, D193, and H195 each coordinate Zn(2+).

This sequence belongs to the PHP family. Zn(2+) serves as cofactor.

The protein is Probable phosphatase AHA_1344 of Aeromonas hydrophila subsp. hydrophila (strain ATCC 7966 / DSM 30187 / BCRC 13018 / CCUG 14551 / JCM 1027 / KCTC 2358 / NCIMB 9240 / NCTC 8049).